The sequence spans 37 residues: M-oxotoxin-Ot2a (37 aa).

As to expression, expressed by the venom gland.

The protein resides in the secreted. Disrupts biological membranes, particularly those rich in phosphocholine. Has antimicrobial activity against Gram-negative bacterium E.coli, Gram-positive bacteria B.subtilis and S.aureus, and hemolytic activity against sheep, pig and guinea pig red blood cells. Has insecticidal activity against S.frugiperda ovarian cells by opening non-selective ion channels. Enhances the insecticidal activity of spider venom neurotoxic peptides. In Oxyopes takobius (Lynx spider), this protein is M-oxotoxin-Ot2a.